The chain runs to 173 residues: Ribosome maturation factor RimM (173 aa).

The region spanning 97–170 (EHEYYYHEII…RIRVHIMEGL (74 aa)) is the PRC barrel domain.

This sequence belongs to the RimM family. Binds ribosomal protein uS19.

The protein resides in the cytoplasm. In terms of biological role, an accessory protein needed during the final step in the assembly of 30S ribosomal subunit, possibly for assembly of the head region. Essential for efficient processing of 16S rRNA. May be needed both before and after RbfA during the maturation of 16S rRNA. It has affinity for free ribosomal 30S subunits but not for 70S ribosomes. The protein is Ribosome maturation factor RimM of Shouchella clausii (strain KSM-K16) (Alkalihalobacillus clausii).